We begin with the raw amino-acid sequence, 741 residues long: Transcription activator of gluconeogenesis BDBG_05438 (741 aa).

The tract at residues 1-70 (MTASTRNGSP…NAKDPLRPRR (70 aa)) is disordered. Residues 25–61 (KSMTTTPANPPETKSQTNGKGSGTAQSSQKPASTSAN) are compositionally biased toward polar residues. Positions 77-105 (CFACQRAHLTCGDERPCQRCIKRGLQDAC) form a DNA-binding region, zn(2)-C6 fungal-type. Disordered regions lie at residues 135-163 (QANT…QSVS), 202-239 (SVFH…SVSG), 285-321 (GAGD…NNQS), 401-421 (TNLM…PGLK), 559-590 (GSSL…PHTG), and 655-741 (FHGK…AKRG). Residues 202 to 226 (SVFHAQSPSSTQNFDLSSNPQTQNL) show a composition bias toward polar residues. Residues 227–238 (SSAMSQTASSVS) show a composition bias toward low complexity. Composition is skewed to polar residues over residues 291–321 (PSDS…NNQS) and 401–416 (TNLM…SRIS). Residues 560-572 (SSLSSASSVRGSS) are compositionally biased toward low complexity. The span at 573-586 (TFTPRNNNTHNSID) shows a compositional bias: polar residues. Over residues 672-718 (TGTTTSGDVATTTATGTSTSNGANANTNGNNTNPNDPSTAASSSASS) the composition is skewed to low complexity. Positions 723-732 (RSNHLGKRGG) are enriched in basic residues.

Belongs to the ERT1/acuK family.

Its subcellular location is the nucleus. Its function is as follows. Transcription factor which regulates nonfermentable carbon utilization. Activator of gluconeogenetic genes. This chain is Transcription activator of gluconeogenesis BDBG_05438, found in Blastomyces gilchristii (strain SLH14081) (Blastomyces dermatitidis).